A 213-amino-acid chain; its full sequence is Ethylene-responsive transcription factor WIN1 (213 aa).

Positions 15–72 form a DNA-binding region, AP2/ERF; the sequence is KFRGVRQRHWGSWVSEIRHPLLKRRVWLGTFETAEEAARAYDEAAVLMSGRNAKTNFP. Positions 70–80 are enriched in polar residues; sequence NFPIQRSSTGE. Disordered stretches follow at residues 70 to 99 and 159 to 213; these read NFPIQRSSTGEPTPAAGRDARSNFSSGSST and ASTD…RFII. A compositionally biased stretch (low complexity) spans 159–174; it reads ASTDAASQSTSATTAP.

Belongs to the AP2/ERF transcription factor family. ERF subfamily. As to expression, mostly expressed in roots, stems and anthers, and, to a lower extent, in leaves, seeds and silks.

Its subcellular location is the nucleus. Functionally, promotes cuticle formation by inducing the expression of enzymes involved in wax biosynthesis, particularly promoting very-long-chain waxes formation. Confers drought resistance. Acts as a transcriptional activator binding directly to promoter regions of CER2, CER3.2 and KCS1, wax biosynthesis-related genes. Binds to the GCC-box pathogenesis-related promoter element. May be involved in the regulation of gene expression by stress factors and by components of stress signal transduction pathways. This chain is Ethylene-responsive transcription factor WIN1, found in Zea mays (Maize).